The primary structure comprises 297 residues: 4,5-DOPA dioxygenase extradiol-like protein (297 aa).

Zn(2+)-binding residues include His30, His82, His205, and His263.

It belongs to the DODA-type extradiol aromatic ring-opening dioxygenase family. It depends on Zn(2+) as a cofactor.

The protein resides in the cytoplasm. The protein localises to the nucleus. May be involved in the metabolism of aromatic compounds. The polypeptide is 4,5-DOPA dioxygenase extradiol-like protein (Schizosaccharomyces pombe (strain 972 / ATCC 24843) (Fission yeast)).